Here is a 179-residue protein sequence, read N- to C-terminus: Apoptosis regulator Bcl-2 homolog (179 aa).

A BH1 motif is present at residues 76 to 95; that stretch reads ELFKDLINWGRICGFIVFSA. A BH2 motif is present at residues 126-141; it reads PWMISHGGQEEFLAFS.

This sequence belongs to the Bcl-2 family. In terms of assembly, interacts with host BECN1 (via BH3 homology domain); this interaction allows the virus to inhibit BECN1, and thus autophagy. Interacts with host BID. Interacts with host BAX.

It localises to the host mitochondrion. The protein localises to the host endoplasmic reticulum. Functionally, suppresses apoptosis in host cell to promote the viral replication. Has the ability to potentially bind to all the members of the proapoptotic Bcl-2 family. Inhibits autophagy by interacting with host Beclin 1 (BECN1). The protein is Apoptosis regulator Bcl-2 homolog of African swine fever virus (isolate Tick/South Africa/Pretoriuskop Pr4/1996) (ASFV).